A 155-amino-acid chain; its full sequence is S-ribosylhomocysteine lyase (155 aa).

Fe cation-binding residues include H54, H58, and C122.

The protein belongs to the LuxS family. In terms of assembly, homodimer. It depends on Fe cation as a cofactor.

The catalysed reaction is S-(5-deoxy-D-ribos-5-yl)-L-homocysteine = (S)-4,5-dihydroxypentane-2,3-dione + L-homocysteine. Its function is as follows. Involved in the synthesis of autoinducer 2 (AI-2) which is secreted by bacteria and is used to communicate both the cell density and the metabolic potential of the environment. The regulation of gene expression in response to changes in cell density is called quorum sensing. Catalyzes the transformation of S-ribosylhomocysteine (RHC) to homocysteine (HC) and 4,5-dihydroxy-2,3-pentadione (DPD). The polypeptide is S-ribosylhomocysteine lyase (Deinococcus geothermalis (strain DSM 11300 / CIP 105573 / AG-3a)).